The following is a 101-amino-acid chain: Small ribosomal subunit protein uS14 (101 aa).

Residues 1–25 (MAKVSAIQKNKSRQKKSQRLHNKRS) are disordered. Basic residues predominate over residues 10–25 (NKSRQKKSQRLHNKRS).

This sequence belongs to the universal ribosomal protein uS14 family. As to quaternary structure, part of the 30S ribosomal subunit. Contacts proteins S3 and S10.

Its function is as follows. Binds 16S rRNA, required for the assembly of 30S particles and may also be responsible for determining the conformation of the 16S rRNA at the A site. The chain is Small ribosomal subunit protein uS14 from Rickettsia typhi (strain ATCC VR-144 / Wilmington).